A 245-amino-acid chain; its full sequence is UDP-N-acetyl-D-mannosaminuronic acid transferase (245 aa).

It belongs to the glycosyltransferase 26 family.

The enzyme catalyses UDP-N-acetyl-alpha-D-mannosaminouronate + N-acetyl-alpha-D-glucosaminyl-di-trans,octa-cis-undecaprenyl diphosphate = beta-D-ManNAcA-(1-&gt;4)-alpha-D-GlcNAc-di-trans,octa-cis-undecaprenyl diphosphate + UDP + H(+). Its pathway is bacterial outer membrane biogenesis; enterobacterial common antigen biosynthesis. Its function is as follows. Catalyzes the synthesis of Und-PP-GlcNAc-ManNAcA (Lipid II), the second lipid-linked intermediate involved in enterobacterial common antigen (ECA) synthesis. The chain is UDP-N-acetyl-D-mannosaminuronic acid transferase from Photorhabdus laumondii subsp. laumondii (strain DSM 15139 / CIP 105565 / TT01) (Photorhabdus luminescens subsp. laumondii).